Consider the following 728-residue polypeptide: Meiotic sister-chromatid recombination protein 3 (728 aa).

Disordered stretches follow at residues 33–171 (QLSA…GRTQ), 236–261 (NETD…LNVE), 300–335 (PTHQ…EAEA), 363–403 (SDNA…VKSN), 422–454 (SAPH…ANTG), 495–514 (VGVS…QHYL), and 561–728 (YGYQ…KSSR). Low complexity predominate over residues 35–46 (SAAAASAASAAS). The segment covering 48 to 58 (DRTNYSRSHSL) has biased composition (polar residues). Phosphoserine occurs at positions 57 and 64. The segment covering 80–93 (STSSAAPPTSRAAA) has biased composition (low complexity). 3 stretches are compositionally biased toward polar residues: residues 95–106 (QYSQKTYSLRSQ), 118–132 (YTTN…TSGA), and 140–171 (KNKS…GRTQ). 3 positions are modified to phosphoserine: Ser127, Ser151, and Ser155. The segment covering 251–261 (HLQDDSELNVE) has biased composition (basic and acidic residues). Over residues 309–326 (IHNKRKQASTTRRKKRPP) the composition is skewed to basic residues. Position 363 is a phosphoserine (Ser363). Polar residues-rich tracts occupy residues 363-373 (SDNASAPLGSN) and 385-403 (TLRS…VKSN). Positions 590–634 (EGVTTAKPSSNEGVMTNPVVTDSPSPLQQQIDSTTASSNGQSQGN) are enriched in polar residues. Positions 635 to 646 (VPTSAVASTTRT) are enriched in low complexity. Position 646 is a phosphothreonine (Thr646). Polar residues-rich tracts occupy residues 654–668 (NLKS…QTPQ), 675–684 (DPTTSSTNEL), and 691–708 (MVTS…TQDP). Residue Ser660 is modified to Phosphoserine. Residues 711-728 (KHKKSSFFTKLFKKKSSR) show a composition bias toward basic residues.

The protein localises to the cell membrane. Functionally, may be involved in the control of meiotic sister-chromatid recombination. In Saccharomyces cerevisiae (strain ATCC 204508 / S288c) (Baker's yeast), this protein is Meiotic sister-chromatid recombination protein 3 (MSC3).